Consider the following 273-residue polypeptide: Phosphatidylglycerol--prolipoprotein diacylglyceryl transferase (273 aa).

Transmembrane regions (helical) follow at residues 21–41 (VSVRWYGLMYLVGFMFALWLA), 60–80 (LLFAGFLGVVIGGRVGYVIFY), 95–115 (VWTGGMSFHGGLLGVITAMFW), 124–144 (FFGVADFVAPLVPFGLGMGRM), 176–196 (SQLYEMFLEGIVLFFILNWFI), 203–223 (GAVSGLFLAGYGTFRFLVEFV), and 237–257 (ISMGQILSSPMIILGILMMVW). Residue arginine 143 participates in a 1,2-diacyl-sn-glycero-3-phospho-(1'-sn-glycerol) binding.

This sequence belongs to the Lgt family.

Its subcellular location is the cell inner membrane. It carries out the reaction L-cysteinyl-[prolipoprotein] + a 1,2-diacyl-sn-glycero-3-phospho-(1'-sn-glycerol) = an S-1,2-diacyl-sn-glyceryl-L-cysteinyl-[prolipoprotein] + sn-glycerol 1-phosphate + H(+). It functions in the pathway protein modification; lipoprotein biosynthesis (diacylglyceryl transfer). Functionally, catalyzes the transfer of the diacylglyceryl group from phosphatidylglycerol to the sulfhydryl group of the N-terminal cysteine of a prolipoprotein, the first step in the formation of mature lipoproteins. The polypeptide is Phosphatidylglycerol--prolipoprotein diacylglyceryl transferase (Vibrio campbellii (strain ATCC BAA-1116)).